Here is a 302-residue protein sequence, read N- to C-terminus: Putative cyclin-D6-1 (302 aa).

It belongs to the cyclin family. Cyclin D subfamily.

This chain is Putative cyclin-D6-1 (CYCD6-1), found in Arabidopsis thaliana (Mouse-ear cress).